A 180-amino-acid polypeptide reads, in one-letter code: Inner membrane-spanning protein YciB (180 aa).

A run of 5 helical transmembrane segments spans residues 25 to 45 (QNAT…CYII), 49 to 69 (VSKL…ITLI), 76 to 96 (IKIK…MSGI), 118 to 138 (IILS…NEVV), and 150 to 170 (FKVF…LPLL).

This sequence belongs to the YciB family.

It localises to the cell inner membrane. Plays a role in cell envelope biogenesis, maintenance of cell envelope integrity and membrane homeostasis. This Rickettsia prowazekii (strain Madrid E) protein is Inner membrane-spanning protein YciB.